The chain runs to 238 residues: Urease subunit alpha (238 aa).

The interval 1–102 (MKLTPKELDK…LVTVHTPIEA (102 aa)) is urease gamma. Residues 103-238 (NGKLVPGELF…DDNYVKTIKE (136 aa)) form a urease beta region.

In the N-terminal section; belongs to the urease gamma subunit family. The protein in the C-terminal section; belongs to the urease beta subunit family. In terms of assembly, heterohexamer of 3 UreA (alpha) and 3 UreB (beta) subunits.

Its subcellular location is the cytoplasm. It carries out the reaction urea + 2 H2O + H(+) = hydrogencarbonate + 2 NH4(+). Its pathway is nitrogen metabolism; urea degradation; CO(2) and NH(3) from urea (urease route): step 1/1. This chain is Urease subunit alpha, found in Helicobacter pylori (strain P12).